A 289-amino-acid polypeptide reads, in one-letter code: Serine/threonine-protein phosphatase Pgam5, mitochondrial (289 aa).

This sequence belongs to the phosphoglycerate mutase family. BPG-dependent PGAM subfamily. As to quaternary structure, interacts with Pk92B/ASK1.

The protein localises to the mitochondrion outer membrane. The catalysed reaction is O-phospho-L-seryl-[protein] + H2O = L-seryl-[protein] + phosphate. It carries out the reaction O-phospho-L-threonyl-[protein] + H2O = L-threonyl-[protein] + phosphate. Displays phosphatase activity for serine/threonine residues, and dephosphorylates and activates Pk92B kinase. Has apparently no phosphoglycerate mutase activity. In Drosophila mojavensis (Fruit fly), this protein is Serine/threonine-protein phosphatase Pgam5, mitochondrial.